Here is a 624-residue protein sequence, read N- to C-terminus: Probable potassium transport system protein Kup (624 aa).

12 consecutive transmembrane segments (helical) span residues 16–36 (ALLT…SPLY), 59–79 (IISM…VMLV), 106–126 (FVAV…VITP), 147–167 (FILP…PLGT), 174–194 (FGPI…PQII), 211–231 (LIVA…LTVT), 252–272 (WFCV…ALVI), 292–312 (IPLV…VISG), 342–362 (IYMP…VLVF), 371–391 (AYGL…LIYV), 394–414 (TWWK…LLFA), and 418–438 (TKIH…IVVM).

This sequence belongs to the HAK/KUP transporter (TC 2.A.72) family.

It is found in the cell membrane. The catalysed reaction is K(+)(in) + H(+)(in) = K(+)(out) + H(+)(out). In terms of biological role, transport of potassium into the cell. Likely operates as a K(+):H(+) symporter. This chain is Probable potassium transport system protein Kup, found in Corynebacterium glutamicum (strain ATCC 13032 / DSM 20300 / JCM 1318 / BCRC 11384 / CCUG 27702 / LMG 3730 / NBRC 12168 / NCIMB 10025 / NRRL B-2784 / 534).